A 136-amino-acid polypeptide reads, in one-letter code: Histone H3.3C (136 aa).

The tract at residues methionine 1–tyrosine 42 is disordered. An Asymmetric dimethylarginine; by PRMT6 modification is found at arginine 3. The residue at position 4 (threonine 4) is a Phosphothreonine; by HASPIN. Lysine 5 is subject to Allysine; alternate. At lysine 5 the chain carries N6,N6,N6-trimethyllysine; alternate. N6,N6-dimethyllysine; alternate is present on lysine 5. At lysine 5 the chain carries N6-(2-hydroxyisobutyryl)lysine; alternate. Residue lysine 5 is modified to N6-acetyllysine; alternate. An N6-methyllysine; alternate modification is found at lysine 5. Residue glutamine 6 is modified to 5-glutamyl dopamine; alternate. Residue glutamine 6 is modified to 5-glutamyl serotonin; alternate. A Phosphothreonine; by PKC modification is found at threonine 7. Lysine 10 is subject to N6-(2-hydroxyisobutyryl)lysine; alternate. The residue at position 10 (lysine 10) is an N6-lactoyllysine; alternate. The residue at position 10 (lysine 10) is an N6-methylated lysine. An ADP-ribosylserine; alternate modification is found at serine 11. Serine 11 carries the phosphoserine; alternate; by AURKB, AURKC, RPS6KA3, RPS6KA4 and RPS6KA5 modification. Threonine 12 carries the phosphothreonine; by PKC modification. Lysine 15 is subject to N6-(2-hydroxyisobutyryl)lysine; alternate. Lysine 15 is subject to N6-lactoyllysine; alternate. Lysine 15 bears the N6-acetyllysine mark. Position 15 is an N6-glutaryllysine; alternate (lysine 15). The residue at position 18 (arginine 18) is an Asymmetric dimethylarginine. 4 positions are modified to N6-(2-hydroxyisobutyryl)lysine; alternate: lysine 19, lysine 24, lysine 28, and lysine 37. At lysine 19 the chain carries N6-acetyllysine; alternate. Residues lysine 19, lysine 24, and lysine 28 each carry the N6-lactoyllysine; alternate modification. N6-glutaryllysine; alternate is present on residues lysine 19, lysine 24, and lysine 28. An N6-butyryllysine; alternate mark is found at lysine 19 and lysine 24. Lysine 19 carries the N6-methylated lysine; alternate modification. At lysine 24 the chain carries N6-acetyllysine. N6-acetyllysine; alternate occurs at positions 28 and 37. Lysine 28 and lysine 37 each carry N6-methylated lysine; alternate. Position 42 is a phosphotyrosine (tyrosine 42). Residue lysine 57 is modified to N6-(2-hydroxyisobutyryl)lysine; alternate. An N6-lactoyllysine; alternate modification is found at lysine 57. Lysine 57 is modified (N6-glutaryllysine; alternate). Lysine 57 is modified (N6-succinyllysine; alternate). Residue serine 58 is modified to Phosphoserine. N6-(2-hydroxyisobutyryl)lysine; alternate occurs at positions 65 and 80. 2 positions are modified to N6-methylated lysine: lysine 65 and lysine 80. Lysine 80 carries the N6-lactoyllysine; alternate modification. Lysine 80 carries the N6-glutaryllysine; alternate modification. Lysine 80 is modified (N6-succinyllysine; alternate). At threonine 81 the chain carries Phosphothreonine. N6-acetyllysine; alternate occurs at positions 116 and 123. N6-glutaryllysine; alternate is present on residues lysine 116 and lysine 123. Lysine 123 is subject to N6-(2-hydroxyisobutyryl)lysine; alternate. At lysine 123 the chain carries N6-methylated lysine; alternate. Lysine 123 carries the N6-succinyllysine; alternate modification.

Belongs to the histone H3 family. In terms of assembly, the nucleosome is a histone octamer containing two molecules each of H2A, H2B, H3 and H4 assembled in one H3-H4 heterotetramer and two H2A-H2B heterodimers. The octamer wraps approximately 147 bp of DNA. Acetylation is generally linked to gene activation. Acetylation on Lys-19 (H3K18ac) and Lys-24 (H3K24ac) favors methylation at Arg-18 (H3R17me). Acetylation at Lys-123 (H3K122ac) by EP300/p300 plays a central role in chromatin structure: localizes at the surface of the histone octamer and stimulates transcription, possibly by promoting nucleosome instability. In terms of processing, asymmetric dimethylation at Arg-18 (H3R17me2a) is linked to gene activation. Asymmetric dimethylation at Arg-3 (H3R2me2a) by PRMT6 is linked to gene repression and is mutually exclusive with H3 Lys-5 methylation (H3K4me2 and H3K4me3). H3R2me2a is present at the 3' of genes regardless of their transcription state and is enriched on inactive promoters, while it is absent on active promoters. Post-translationally, methylation at Lys-5 (H3K4me) and Lys-80 (H3K79me) are linked to gene activation. Methylation at Lys-5 (H3K4me) facilitates subsequent acetylation of H3 and H4. Methylation at Lys-80 (H3K79me) is associated with DNA double-strand break (DSB) responses and is a specific target for TP53BP1. Methylation at Lys-10 (H3K9me) and Lys-28 (H3K27me) are linked to gene repression. Methylation at Lys-10 (H3K9me) is a specific target for HP1 proteins (CBX1, CBX3 and CBX5) and prevents subsequent phosphorylation at Ser-11 (H3S10ph) and acetylation of H3 and H4. Methylation at Lys-5 (H3K4me) and Lys-80 (H3K79me) require preliminary monoubiquitination of H2B at 'Lys-120'. Phosphorylated at Thr-4 (H3T3ph) by HASPIN during prophase and dephosphorylated during anaphase. Phosphorylation at Ser-11 (H3S10ph) by aurkb is crucial for chromosome condensation and cell-cycle progression during mitosis and meiosis. In addition phosphorylation at Ser-11 (H3S10ph) by rps6ka4 and rps6ka5 is important during interphase because it enables the transcription of genes following external stimulation, like mitogens, stress, growth factors or UV irradiation and result in the activation of genes, such as c-fos and c-jun. Phosphorylation at Ser-11 (H3S10ph), which is linked to gene activation, prevents methylation at Lys-10 (H3K9me) but facilitates acetylation of H3 and H4. Phosphorylation at Ser-11 (H3S10ph) by aurkb mediates the dissociation of HP1 proteins (cbx1, cbx3 and cbx5) from heterochromatin. Phosphorylation at Ser-11 (H3S10ph) is also an essential regulatory mechanism for neoplastic cell transformation. Phosphorylation at Thr-7 (H3T6ph) by prkcb is a specific tag for epigenetic transcriptional activation that prevents demethylation of Lys-5 (H3K4me) by lsd1/kdm1a. At centromeres, specifically phosphorylated at Thr-12 (H3T11ph) from prophase to early anaphase, by DAPK3 and PKN1. Phosphorylation at Thr-12 (H3T11ph) by PKN1 or isoform M2 of PKM (PKM2) is a specific tag for epigenetic transcriptional activation that promotes demethylation of Lys-10 (H3K9me) by kdm4c/jmjd2c. Phosphorylation at Tyr-42 (H3Y41ph) by jak2 promotes exclusion of cbx5 (HP1 alpha) from chromatin. In terms of processing, lysine deamination at Lys-5 (H3K4all) to form allysine only takes place on H3K4me3 and results in gene repression. Post-translationally, butyrylation of histones marks active promoters and competes with histone acetylation. It is present during late spermatogenesis. Succinylation at Lys-80 (H3K79succ) by KAT2A takes place with a maximum frequency around the transcription start sites of genes. It gives a specific tag for epigenetic transcription activation. Desuccinylation at Lys-123 (H3K122succ) by SIRT7 in response to DNA damage promotes chromatin condensation and double-strand breaks (DSBs) repair. In terms of processing, serine ADP-ribosylation constitutes the primary form of ADP-ribosylation of proteins in response to DNA damage. Serine ADP-ribosylation at Ser-11 (H3S10ADPr) is mutually exclusive with phosphorylation at Ser-11 (H3S10ph) and impairs acetylation at Lys-10 (H3K9ac).

Its subcellular location is the nucleus. The protein localises to the chromosome. Core component of nucleosome. Nucleosomes wrap and compact DNA into chromatin, limiting DNA accessibility to the cellular machineries which require DNA as a template. Histones thereby play a central role in transcription regulation, DNA repair, DNA replication and chromosomal stability. DNA accessibility is regulated via a complex set of post-translational modifications of histones, also called histone code, and nucleosome remodeling. The protein is Histone H3.3C (h3-5) of Xenopus laevis (African clawed frog).